The sequence spans 229 residues: Germin-like protein subfamily 1 member 7 (229 aa).

Positions 1 to 24 (MEGFLRFLVAKAILLALASSFVSC) are cleaved as a signal peptide. A disulfide bridge connects residues C34 and C50. Positions 64–215 (SGLNIAGNTI…AFQLDVNVVK (152 aa)) constitute a Cupin type-1 domain. N-linked (GlcNAc...) asparagine glycosylation occurs at N79. The Mn(2+) site is built by H112, H114, E119, and H161.

This sequence belongs to the germin family. As to quaternary structure, oligomer (believed to be a pentamer but probably hexamer).

It is found in the secreted. The protein resides in the extracellular space. Its subcellular location is the apoplast. Functionally, may play a role in plant defense. Probably has no oxalate oxidase activity even if the active site is conserved. The polypeptide is Germin-like protein subfamily 1 member 7 (Arabidopsis thaliana (Mouse-ear cress)).